We begin with the raw amino-acid sequence, 342 residues long: Protease HtpX homolog (342 aa).

Transmembrane regions (helical) follow at residues 6-26 (TAML…LIGG) and 28-48 (GGMM…YWNS). Residue His130 participates in Zn(2+) binding. Residue Glu131 is part of the active site. Zn(2+) is bound at residue His134. Helical transmembrane passes span 145-165 (ITAT…FFGG) and 173-193 (GGGI…AMLV). Glu202 is a binding site for Zn(2+). A disordered region spans residues 290 to 342 (PQHSKPAASGPWGSSAERSTDDPWGVKGGASTRSVPKIGRRGKDNDAPKGPWN).

The protein belongs to the peptidase M48B family. Zn(2+) is required as a cofactor.

The protein localises to the cell inner membrane. This Allorhizobium ampelinum (strain ATCC BAA-846 / DSM 112012 / S4) (Agrobacterium vitis (strain S4)) protein is Protease HtpX homolog.